A 354-amino-acid polypeptide reads, in one-letter code: Homer protein homolog 2 (354 aa).

The region spanning Met-1 to Ala-110 is the WH1 domain. A coiled-coil region spans residues Ser-92–Lys-120. Residues Arg-114–Lys-163 are disordered. Polar residues predominate over residues Thr-123 to Gly-146. Residues Thr-160 to Phe-329 are a coiled coil.

This sequence belongs to the Homer family. Isoform 1 and isoform 2 encode coiled-coil structures that mediate homo- and heteromultimerization. Interacts with NFATC2; interaction is reduced by AKT activation. Interacts with NFATC1 and NFATC4. Interacts with DAGLA (via PPXXF motif); this interaction is required for the cell membrane localization of DAGLA. As to expression, constitutively expressed in the adult hippocampus.

The protein resides in the cytoplasm. It localises to the cell membrane. Its subcellular location is the postsynaptic density. The protein localises to the synapse. It is found in the cell projection. The protein resides in the stereocilium. Its function is as follows. Postsynaptic density scaffolding protein. Binds and cross-links cytoplasmic regions of GRM1, GRM5, ITPR1, DNM3, RYR1, RYR2, SHANK1 and SHANK3. By physically linking GRM1 and GRM5 with ER-associated ITPR1 receptors, it aids the coupling of surface receptors to intracellular calcium release. May also couple GRM1 to PI3 kinase through its interaction with AGAP2. Isoforms can be differently regulated and may play an important role in maintaining the plasticity at glutamatergic synapses. Required for normal hearing. Negatively regulates T cell activation by inhibiting the calcineurin-NFAT pathway. Acts by competing with calcineurin/PPP3CA for NFAT protein binding, hence preventing NFAT activation by PPP3CA. The sequence is that of Homer protein homolog 2 from Rattus norvegicus (Rat).